We begin with the raw amino-acid sequence, 142 residues long: Hemoglobin subunit beta (142 aa).

The 140-residue stretch at 3 to 142 (KLSEDQEHYI…VAEALSSNYH (140 aa)) folds into the Globin domain. Heme b is bound by residues His-60 and His-89.

Belongs to the globin family. As to quaternary structure, heterotetramer of two alpha chains and two beta chains. Red blood cells.

Its function is as follows. Involved in oxygen transport from gills to the various peripheral tissues. The polypeptide is Hemoglobin subunit beta (HBB) (Hemitrygon akajei (Red stingray)).